An 883-amino-acid polypeptide reads, in one-letter code: Phosphoenolpyruvate carboxylase (883 aa).

Active-site residues include histidine 138 and lysine 546.

Belongs to the PEPCase type 1 family. Requires Mg(2+) as cofactor.

The catalysed reaction is oxaloacetate + phosphate = phosphoenolpyruvate + hydrogencarbonate. Its function is as follows. Forms oxaloacetate, a four-carbon dicarboxylic acid source for the tricarboxylic acid cycle. The protein is Phosphoenolpyruvate carboxylase of Salmonella dublin (strain CT_02021853).